Here is a 252-residue protein sequence, read N- to C-terminus: uncharacterized protein (252 aa).

Residue 28 to 35 (GCDGTGKS) participates in ATP binding.

It to E.coli YghS and YghT.

This is an uncharacterized protein from Escherichia coli O6:H1 (strain CFT073 / ATCC 700928 / UPEC).